Consider the following 345-residue polypeptide: Altered inheritance of mitochondria protein 39, mitochondrial (345 aa).

A mitochondrion-targeting transit peptide spans 1–29; the sequence is MLSLRRGLITKSYLNYKFVNHLAVIPRNY. The segment at 46-91 is disordered; that stretch reads NDKGSYADSKHFFTKPNGKMNSNEQIDQMHNNGSNNPNNNKNGSTD. Polar residues predominate over residues 64–75; it reads KMNSNEQIDQMH. A compositionally biased stretch (low complexity) spans 76-89; sequence NNGSNNPNNNKNGS. The chain crosses the membrane as a helical span at residues 113–133; the sequence is LGISIFAVLIGYSIGYKVIYL.

Belongs to the AIM39 family.

The protein resides in the mitochondrion membrane. The polypeptide is Altered inheritance of mitochondria protein 39, mitochondrial (AIM39) (Vanderwaltozyma polyspora (strain ATCC 22028 / DSM 70294 / BCRC 21397 / CBS 2163 / NBRC 10782 / NRRL Y-8283 / UCD 57-17) (Kluyveromyces polysporus)).